The following is a 1806-amino-acid chain: uncharacterized protein (1806 aa).

2 disordered regions span residues 38 to 131 and 158 to 282; these read EASG…SPLF and KAVS…KPRP. The segment covering 51 to 70 has biased composition (low complexity); the sequence is KSPLRSPARLLPLPRLAPKP. 7 positions are modified to phosphoserine: Ser52, Ser56, Ser79, Ser87, Ser88, Ser92, and Ser128. Residues 82-100 show a composition bias toward low complexity; that stretch reads PSLRPSSTGPSPSGGLSEE. Over residues 226-236 the composition is skewed to basic and acidic residues; sequence DTARPLVEPRP. 2 positions are modified to phosphoserine: Ser244 and Ser284. Disordered stretches follow at residues 299–320, 355–431, 456–604, and 627–696; these read RKVA…ERPR, KEKM…GGEW, SESP…PEDD, and QSGR…ELRP. Ser366 is subject to Phosphoserine. A Phosphothreonine modification is found at Thr378. At Ser384 the chain carries Phosphoserine. Basic and acidic residues predominate over residues 386 to 400; sequence WEEKAKLDPEPEKAA. Ser404 is modified (phosphoserine). Over residues 412–422 the composition is skewed to basic and acidic residues; sequence ELAEVKSRVAD. A compositionally biased stretch (low complexity) spans 456 to 470; it reads SESPLATPASPSAAP. Residues Ser458 and Ser508 each carry the phosphoserine modification. The segment covering 514-523 has biased composition (polar residues); the sequence is LFSSSASSNE. Composition is skewed to basic and acidic residues over residues 524–549 and 564–573; these read VKYE…EGHS and TLRDKSRQTE. Position 600 is a phosphothreonine (Thr600). Basic and acidic residues-rich tracts occupy residues 641 to 652 and 661 to 674; these read AHARVSEPRPRP and DPPD…ENSR. Ser749 is subject to Phosphoserine. Disordered stretches follow at residues 860-901, 969-989, and 1000-1019; these read QHEG…QART, SPHV…ALRK, and QEVN…KQGS. The segment covering 889 to 900 has biased composition (polar residues); the sequence is RATNGPSDSQAR. Phosphoserine is present on residues Ser969 and Ser981. Basic and acidic residues predominate over residues 969–978; the sequence is SPHVGHRRTD. Residue Thr1059 is modified to Phosphothreonine. Phosphoserine is present on residues Ser1063 and Ser1154. The segment at 1134 to 1178 is disordered; the sequence is RGSEDGPRPQSNWKESANKMSPSGGAPQTTPTLRSRPKDLPVRRK. Over residues 1142–1166 the composition is skewed to polar residues; sequence PQSNWKESANKMSPSGGAPQTTPTL. At Thr1163 the chain carries Phosphothreonine. Over residues 1169 to 1178 the composition is skewed to basic and acidic residues; it reads RPKDLPVRRK. Phosphothreonine occurs at positions 1179 and 1185. Disordered stretches follow at residues 1216-1265 and 1291-1493; these read PGEA…PASS and KSSP…VASV. Ser1224 carries the post-translational modification Phosphoserine. Residue Thr1226 is modified to Phosphothreonine. Basic and acidic residues-rich tracts occupy residues 1244-1254 and 1317-1331; these read EQRRRSLKEMP and DPRK…DRKA. Ser1366 bears the Phosphoserine mark. Composition is skewed to basic and acidic residues over residues 1393 to 1410 and 1426 to 1437; these read DHPR…RAYS and HEARERRREQPK. Ser1441 carries the post-translational modification Phosphoserine. A compositionally biased stretch (basic and acidic residues) spans 1462-1483; it reads DSHKVLPRDLEKEDAPQEKERP. Ser1488 and Ser1506 each carry phosphoserine. 2 disordered regions span residues 1512 to 1627 and 1642 to 1806; these read QLKQ…KRVD and ALKT…ENQV. Residues 1522-1531 are compositionally biased toward basic and acidic residues; it reads TEPKDTDTLV. Over residues 1537–1568 the composition is skewed to polar residues; sequence QYGTWTEQCQSGESLATESPDSSATSTRKQPP. Phosphoserine occurs at positions 1555 and 1662. Residues 1649-1666 are compositionally biased toward basic residues; sequence LSKRSRRRAPISHSLRRS. 2 stretches are compositionally biased toward basic and acidic residues: residues 1667-1677 and 1689-1714; these read RFSESESRSPL and DSTE…ERTP. Residues Ser1701, Ser1757, Ser1760, and Ser1786 each carry the phosphoserine modification. Positions 1753–1764 are enriched in low complexity; the sequence is PQPKSPKSPFQP.

This is an uncharacterized protein from Homo sapiens (Human).